A 253-amino-acid polypeptide reads, in one-letter code: Hydroxyacylglutathione hydrolase (253 aa).

Positions 54, 56, 58, 59, 112, 131, and 169 each coordinate Zn(2+).

It belongs to the metallo-beta-lactamase superfamily. Glyoxalase II family. Monomer. Requires Zn(2+) as cofactor.

The catalysed reaction is an S-(2-hydroxyacyl)glutathione + H2O = a 2-hydroxy carboxylate + glutathione + H(+). The protein operates within secondary metabolite metabolism; methylglyoxal degradation; (R)-lactate from methylglyoxal: step 2/2. In terms of biological role, thiolesterase that catalyzes the hydrolysis of S-D-lactoyl-glutathione to form glutathione and D-lactic acid. This chain is Hydroxyacylglutathione hydrolase, found in Bartonella henselae (strain ATCC 49882 / DSM 28221 / CCUG 30454 / Houston 1) (Rochalimaea henselae).